Here is a 378-residue protein sequence, read N- to C-terminus: Chaperone protein DnaJ (378 aa).

In terms of domain architecture, J spans 4-68 (DFYEILGVSR…ETRARYDRFG (65 aa)). The CR-type zinc finger occupies 136–218 (GGEKEIRIPH…CGGAGRKQET (83 aa)). 8 residues coordinate Zn(2+): Cys-149, Cys-152, Cys-166, Cys-169, Cys-192, Cys-195, Cys-206, and Cys-209. CXXCXGXG motif repeat units follow at residues 149 to 156 (CKTCSGSG), 166 to 173 (CGTCNGTG), 192 to 199 (CPTCNGEG), and 206 to 213 (CESCGGAG).

Belongs to the DnaJ family. As to quaternary structure, homodimer. The cofactor is Zn(2+).

It is found in the cytoplasm. Functionally, participates actively in the response to hyperosmotic and heat shock by preventing the aggregation of stress-denatured proteins and by disaggregating proteins, also in an autonomous, DnaK-independent fashion. Unfolded proteins bind initially to DnaJ; upon interaction with the DnaJ-bound protein, DnaK hydrolyzes its bound ATP, resulting in the formation of a stable complex. GrpE releases ADP from DnaK; ATP binding to DnaK triggers the release of the substrate protein, thus completing the reaction cycle. Several rounds of ATP-dependent interactions between DnaJ, DnaK and GrpE are required for fully efficient folding. Also involved, together with DnaK and GrpE, in the DNA replication of plasmids through activation of initiation proteins. The polypeptide is Chaperone protein DnaJ (Picosynechococcus sp. (strain ATCC 27264 / PCC 7002 / PR-6) (Agmenellum quadruplicatum)).